Consider the following 269-residue polypeptide: Glutamate racemase (269 aa).

Substrate is bound by residues 14 to 15 (DS) and 46 to 47 (YS). Residue Cys78 is the Proton donor/acceptor of the active site. 79–80 (NT) serves as a coordination point for substrate. Cys189 serves as the catalytic Proton donor/acceptor. Position 190-191 (190-191 (TH)) interacts with substrate.

The protein belongs to the aspartate/glutamate racemases family.

It carries out the reaction L-glutamate = D-glutamate. It functions in the pathway cell wall biogenesis; peptidoglycan biosynthesis. In terms of biological role, provides the (R)-glutamate required for cell wall biosynthesis. The polypeptide is Glutamate racemase (Haemophilus influenzae (strain ATCC 51907 / DSM 11121 / KW20 / Rd)).